A 163-amino-acid chain; its full sequence is Large ribosomal subunit protein uL10 (163 aa).

Belongs to the universal ribosomal protein uL10 family. As to quaternary structure, part of the ribosomal stalk of the 50S ribosomal subunit. The N-terminus interacts with L11 and the large rRNA to form the base of the stalk. The C-terminus forms an elongated spine to which L12 dimers bind in a sequential fashion forming a multimeric L10(L12)X complex.

Its function is as follows. Forms part of the ribosomal stalk, playing a central role in the interaction of the ribosome with GTP-bound translation factors. The polypeptide is Large ribosomal subunit protein uL10 (rplJ) (Haemophilus influenzae (strain ATCC 51907 / DSM 11121 / KW20 / Rd)).